The chain runs to 281 residues: Energy-coupling factor transporter ATP-binding protein EcfA1 (281 aa).

An ABC transporter domain is found at Ile-7–Asp-242. Gly-42–Ser-49 contributes to the ATP binding site. Glu-168 (proton acceptor) is an active-site residue.

This sequence belongs to the ABC transporter superfamily. Energy-coupling factor EcfA family. As to quaternary structure, forms a stable energy-coupling factor (ECF) transporter complex composed of 2 membrane-embedded substrate-binding proteins (S component), 2 ATP-binding proteins (A component) and 2 transmembrane proteins (T component).

It localises to the cell membrane. ATP-binding (A) component of a common energy-coupling factor (ECF) ABC-transporter complex. Unlike classic ABC transporters this ECF transporter provides the energy necessary to transport a number of different substrates. The chain is Energy-coupling factor transporter ATP-binding protein EcfA1 from Bacillus subtilis (strain 168).